The sequence spans 431 residues: Glutamate-1-semialdehyde 2,1-aminomutase (431 aa).

Position 265 is an N6-(pyridoxal phosphate)lysine (Lys265).

The protein belongs to the class-III pyridoxal-phosphate-dependent aminotransferase family. HemL subfamily. In terms of assembly, homodimer. It depends on pyridoxal 5'-phosphate as a cofactor.

It is found in the cytoplasm. The enzyme catalyses (S)-4-amino-5-oxopentanoate = 5-aminolevulinate. It participates in porphyrin-containing compound metabolism; protoporphyrin-IX biosynthesis; 5-aminolevulinate from L-glutamyl-tRNA(Glu): step 2/2. The polypeptide is Glutamate-1-semialdehyde 2,1-aminomutase (Aliivibrio salmonicida (strain LFI1238) (Vibrio salmonicida (strain LFI1238))).